The sequence spans 338 residues: Mitoferrin-1 (338 aa).

The segment at 1-37 is disordered; it reads MELRRGGVGNQAAGRRMDGDCRDGGCGSKDAGSEDYE. 3 Solcar repeats span residues 43–131, 141–225, and 232–326; these read ASVS…MKRT, NSHL…LQEQ, and YNPQ…FKYI. 6 helical membrane passes run 45 to 64, 106 to 125, 143 to 162, 200 to 219, 234 to 253, and 301 to 320; these read VSTH…SIMY, GLNV…FACY, HLAN…AVMN, SYTT…FITY, PQSH…AATT, and GIQA…WSVY.

This sequence belongs to the mitochondrial carrier (TC 2.A.29) family. As to quaternary structure, interacts with ACB10; this interaction stabilizes SLC25A37 and enhances the function of SLC25A37 to import mitochondrial iron during erythroid differentiation. Highly expressed in hematopoietic organs, fetal liver, bone marrow and spleen.

The protein localises to the mitochondrion inner membrane. It catalyses the reaction Fe(2+)(in) = Fe(2+)(out). Functionally, mitochondrial iron transporter that specifically mediates iron uptake in developing erythroid cells, thereby playing an essential role in heme biosynthesis. The chain is Mitoferrin-1 (Slc25a37) from Mus musculus (Mouse).